Here is a 64-residue protein sequence, read N- to C-terminus: Large ribosomal subunit protein bL35 (64 aa).

Belongs to the bacterial ribosomal protein bL35 family.

In Lactiplantibacillus plantarum (strain ATCC BAA-793 / NCIMB 8826 / WCFS1) (Lactobacillus plantarum), this protein is Large ribosomal subunit protein bL35.